The following is a 96-amino-acid chain: NADH-quinone oxidoreductase subunit K (96 aa).

Transmembrane regions (helical) follow at residues M1–R21, I25–F45, and V56–I76.

Belongs to the complex I subunit 4L family. As to quaternary structure, NDH-1 is composed of 14 different subunits. Subunits NuoA, H, J, K, L, M, N constitute the membrane sector of the complex.

It localises to the cell membrane. The enzyme catalyses a quinone + NADH + 5 H(+)(in) = a quinol + NAD(+) + 4 H(+)(out). In terms of biological role, NDH-1 shuttles electrons from NADH, via FMN and iron-sulfur (Fe-S) centers, to quinones in the respiratory chain. The immediate electron acceptor for the enzyme in this species is believed to be a menaquinone. Couples the redox reaction to proton translocation (for every two electrons transferred, four hydrogen ions are translocated across the cytoplasmic membrane), and thus conserves the redox energy in a proton gradient. The chain is NADH-quinone oxidoreductase subunit K from Thermobifida fusca (strain YX).